A 371-amino-acid polypeptide reads, in one-letter code: Histidinol-phosphate aminotransferase (371 aa).

Lys222 carries the N6-(pyridoxal phosphate)lysine modification.

It belongs to the class-II pyridoxal-phosphate-dependent aminotransferase family. Histidinol-phosphate aminotransferase subfamily. Homodimer. It depends on pyridoxal 5'-phosphate as a cofactor.

It catalyses the reaction L-histidinol phosphate + 2-oxoglutarate = 3-(imidazol-4-yl)-2-oxopropyl phosphate + L-glutamate. It participates in amino-acid biosynthesis; L-histidine biosynthesis; L-histidine from 5-phospho-alpha-D-ribose 1-diphosphate: step 7/9. The protein is Histidinol-phosphate aminotransferase of Anoxybacillus flavithermus (strain DSM 21510 / WK1).